We begin with the raw amino-acid sequence, 373 residues long: Probable pectin lyase C (373 aa).

The signal sequence occupies residues Met1–Ala18. 2 cysteine pairs are disulfide-bonded: Cys81-Cys100 and Cys90-Cys220. Asn123 carries an N-linked (GlcNAc...) asparagine glycan. Residue Arg250 is part of the active site. Cys316 and Cys324 are disulfide-bonded.

The protein belongs to the polysaccharide lyase 1 family.

The protein localises to the secreted. It catalyses the reaction Eliminative cleavage of (1-&gt;4)-alpha-D-galacturonan methyl ester to give oligosaccharides with 4-deoxy-6-O-methyl-alpha-D-galact-4-enuronosyl groups at their non-reducing ends.. Functionally, pectinolytic enzymes consist of four classes of enzymes: pectin lyase, polygalacturonase, pectin methylesterase and rhamnogalacturonase. Among pectinolytic enzymes, pectin lyase is the most important in depolymerization of pectin, since it cleaves internal glycosidic bonds of highly methylated pectins. The chain is Probable pectin lyase C (pelC) from Aspergillus niger (strain ATCC MYA-4892 / CBS 513.88 / FGSC A1513).